The following is a 38-amino-acid chain: CHH precursor-related peptide (38 aa).

The tract at residues 18-38 is disordered; it reads GALEPSTPLGDLSGSLGHPVE.

Produced by the medulla terminalis X-organ in the eyestalks and transported to the sinus gland where it is stored and released.

Its subcellular location is the secreted. This is CHH precursor-related peptide from Cancer pagurus (Rock crab).